We begin with the raw amino-acid sequence, 206 residues long: Large ribosomal subunit protein uL4 (206 aa).

This sequence belongs to the universal ribosomal protein uL4 family. In terms of assembly, part of the 50S ribosomal subunit.

One of the primary rRNA binding proteins, this protein initially binds near the 5'-end of the 23S rRNA. It is important during the early stages of 50S assembly. It makes multiple contacts with different domains of the 23S rRNA in the assembled 50S subunit and ribosome. In terms of biological role, forms part of the polypeptide exit tunnel. The protein is Large ribosomal subunit protein uL4 of Cereibacter sphaeroides (strain ATCC 17025 / ATH 2.4.3) (Rhodobacter sphaeroides).